A 172-amino-acid chain; its full sequence is 3-hydroxydecanoyl-[acyl-carrier-protein] dehydratase (172 aa).

The active site involves H71.

This sequence belongs to the thioester dehydratase family. FabA subfamily. Homodimer.

The protein resides in the cytoplasm. The catalysed reaction is a (3R)-hydroxyacyl-[ACP] = a (2E)-enoyl-[ACP] + H2O. It catalyses the reaction (3R)-hydroxydecanoyl-[ACP] = (2E)-decenoyl-[ACP] + H2O. It carries out the reaction (2E)-decenoyl-[ACP] = (3Z)-decenoyl-[ACP]. The protein operates within lipid metabolism; fatty acid biosynthesis. Necessary for the introduction of cis unsaturation into fatty acids. Catalyzes the dehydration of (3R)-3-hydroxydecanoyl-ACP to E-(2)-decenoyl-ACP and then its isomerization to Z-(3)-decenoyl-ACP. Can catalyze the dehydratase reaction for beta-hydroxyacyl-ACPs with saturated chain lengths up to 16:0, being most active on intermediate chain length. In Escherichia coli (strain SE11), this protein is 3-hydroxydecanoyl-[acyl-carrier-protein] dehydratase.